Consider the following 114-residue polypeptide: T cell receptor alpha variable 3 (114 aa).

The signal sequence occupies residues 1–20 (MASAPISMLAMLFTLSGLRA). The Ig-like domain maps to 21–114 (QSVAQPEDQV…SALYFCAVRD (94 aa)). Cys42 and Cys110 are disulfide-bonded. Asn87 carries N-linked (GlcNAc...) asparagine glycosylation.

In terms of assembly, alpha-beta TR is a heterodimer composed of an alpha and beta chain; disulfide-linked. The alpha-beta TR is associated with the transmembrane signaling CD3 coreceptor proteins to form the TR-CD3 (TcR or TCR). The assembly of alpha-beta TR heterodimers with CD3 occurs in the endoplasmic reticulum where a single alpha-beta TR heterodimer associates with one CD3D-CD3E heterodimer, one CD3G-CD3E heterodimer and one CD247 homodimer forming a stable octameric structure. CD3D-CD3E and CD3G-CD3E heterodimers preferentially associate with TR alpha and TR beta chains, respectively. The association of the CD247 homodimer is the last step of TcR assembly in the endoplasmic reticulum and is required for transport to the cell surface.

It is found in the cell membrane. In terms of biological role, v region of the variable domain of T cell receptor (TR) alpha chain that participates in the antigen recognition. Alpha-beta T cell receptors are antigen specific receptors which are essential to the immune response and are present on the cell surface of T lymphocytes. Recognize peptide-major histocompatibility (MH) (pMH) complexes that are displayed by antigen presenting cells (APC), a prerequisite for efficient T cell adaptive immunity against pathogens. Binding of alpha-beta TR to pMH complex initiates TR-CD3 clustering on the cell surface and intracellular activation of LCK that phosphorylates the ITAM motifs of CD3G, CD3D, CD3E and CD247 enabling the recruitment of ZAP70. In turn ZAP70 phosphorylates LAT, which recruits numerous signaling molecules to form the LAT signalosome. The LAT signalosome propagates signal branching to three major signaling pathways, the calcium, the mitogen-activated protein kinase (MAPK) kinase and the nuclear factor NF-kappa-B (NF-kB) pathways, leading to the mobilization of transcription factors that are critical for gene expression and essential for T cell growth and differentiation. The T cell repertoire is generated in the thymus, by V-(D)-J rearrangement. This repertoire is then shaped by intrathymic selection events to generate a peripheral T cell pool of self-MH restricted, non-autoaggressive T cells. Post-thymic interaction of alpha-beta TR with the pMH complexes shapes TR structural and functional avidity. The chain is T cell receptor alpha variable 3 from Homo sapiens (Human).